Consider the following 97-residue polypeptide: Cell division topological specificity factor (97 aa).

This sequence belongs to the MinE family.

In terms of biological role, prevents the cell division inhibition by proteins MinC and MinD at internal division sites while permitting inhibition at polar sites. This ensures cell division at the proper site by restricting the formation of a division septum at the midpoint of the long axis of the cell. The chain is Cell division topological specificity factor from Synechococcus sp. (strain RCC307).